The primary structure comprises 136 residues: MSQLVYFSSSSENTQRFIERLGLPAVRIPLNERERIQVDEPYILIVPSYGGGGTAGAVPRQVIRFLNDEHNRALLRGVIASGNRNFGEAYGRAGDVIARKCSVPWLYRFELMGTQSDIENVRKGVTEFWQRQPQNA.

This sequence belongs to the NrdI family.

Probably involved in ribonucleotide reductase function. This is Protein NrdI from Escherichia coli O1:K1 / APEC.